The following is a 638-amino-acid chain: Threonine--tRNA ligase (638 aa).

Residues 1-61 enclose the TGS domain; sequence MPLITLPDGN…DKDCSVKIFT (61 aa). The interval 243-535 is catalytic; it reads DHRKLGKEMD…LIENYAGKFP (293 aa). 3 residues coordinate Zn(2+): C335, H386, and H512.

Belongs to the class-II aminoacyl-tRNA synthetase family. In terms of assembly, homodimer. Zn(2+) is required as a cofactor.

Its subcellular location is the cytoplasm. It catalyses the reaction tRNA(Thr) + L-threonine + ATP = L-threonyl-tRNA(Thr) + AMP + diphosphate + H(+). Its function is as follows. Catalyzes the attachment of threonine to tRNA(Thr) in a two-step reaction: L-threonine is first activated by ATP to form Thr-AMP and then transferred to the acceptor end of tRNA(Thr). Also edits incorrectly charged L-seryl-tRNA(Thr). This chain is Threonine--tRNA ligase, found in Pelagibacter ubique (strain HTCC1062).